The primary structure comprises 90 residues: DNA-binding protein HU-1 (90 aa).

The residue at position 4 (Thr-4) is a Phosphothreonine. The tract at residues 55–90 is disordered; sequence RSARKGRNPQTGEEIEIPATKNPAFKPGKQLKDAVN.

This sequence belongs to the bacterial histone-like protein family. Homodimer.

Histone-like DNA-binding protein which is capable of wrapping DNA to stabilize it, and thus to prevent its denaturation under extreme environmental conditions. This is DNA-binding protein HU-1 (hup1) from Halalkalibacterium halodurans (strain ATCC BAA-125 / DSM 18197 / FERM 7344 / JCM 9153 / C-125) (Bacillus halodurans).